Reading from the N-terminus, the 1220-residue chain is Pesticidal crystal protein Cry5Ac (1220 aa).

Residues 1194–1220 (PLPTDDQNSEGNTAFSTNSDTSMNNNQ) form a disordered region. Residues 1198-1220 (DDQNSEGNTAFSTNSDTSMNNNQ) are compositionally biased toward polar residues.

It belongs to the delta endotoxin family.

Promotes colloidosmotic lysis by binding to the midgut epithelial cells of hymenopteran species. This Bacillus thuringiensis protein is Pesticidal crystal protein Cry5Ac (cry5Ac).